The chain runs to 206 residues: Cytidylate kinase (206 aa).

Residue 7 to 15 (GPAASGKGT) participates in ATP binding.

It belongs to the cytidylate kinase family. Type 1 subfamily.

It is found in the cytoplasm. It carries out the reaction CMP + ATP = CDP + ADP. The enzyme catalyses dCMP + ATP = dCDP + ADP. The sequence is that of Cytidylate kinase from Azorhizobium caulinodans (strain ATCC 43989 / DSM 5975 / JCM 20966 / LMG 6465 / NBRC 14845 / NCIMB 13405 / ORS 571).